Reading from the N-terminus, the 179-residue chain is ATP synthase subunit delta (179 aa).

It belongs to the ATPase delta chain family. As to quaternary structure, F-type ATPases have 2 components, F(1) - the catalytic core - and F(0) - the membrane proton channel. F(1) has five subunits: alpha(3), beta(3), gamma(1), delta(1), epsilon(1). F(0) has three main subunits: a(1), b(2) and c(10-14). The alpha and beta chains form an alternating ring which encloses part of the gamma chain. F(1) is attached to F(0) by a central stalk formed by the gamma and epsilon chains, while a peripheral stalk is formed by the delta and b chains.

It is found in the cell inner membrane. Functionally, f(1)F(0) ATP synthase produces ATP from ADP in the presence of a proton or sodium gradient. F-type ATPases consist of two structural domains, F(1) containing the extramembraneous catalytic core and F(0) containing the membrane proton channel, linked together by a central stalk and a peripheral stalk. During catalysis, ATP synthesis in the catalytic domain of F(1) is coupled via a rotary mechanism of the central stalk subunits to proton translocation. This protein is part of the stalk that links CF(0) to CF(1). It either transmits conformational changes from CF(0) to CF(1) or is implicated in proton conduction. The protein is ATP synthase subunit delta of Maricaulis maris (strain MCS10) (Caulobacter maris).